The primary structure comprises 83 residues: MPYSRDITKFITATEPEVGLPLLALQRSKSIIGVILLVISLLFIFIGIIILSVSSYTTTGSIFVVLSLILGGGGFFLIYKDNS.

The next 2 membrane-spanning stretches (helical) occupy residues 31 to 51 (IIGVILLVISLLFIFIGIIIL) and 59 to 79 (TGSIFVVLSLILGGGGFFLIY).

It belongs to the asfivirus EP84R family.

The protein resides in the virion membrane. This chain is Transmembrane protein EP84R, found in Ornithodoros (relapsing fever ticks).